Reading from the N-terminus, the 131-residue chain is MCMTDPIADMLTRIRNAQSAEQKEIKMPSSKLKKAILKILKEEGYIENFQEDPNHKKPSISVILKYFNGEPVITSISRVSKPGLRSYKSKNDLPRVMNGLGVAIVSTSKGVMTERTARMAGVGGELLCVVT.

The protein belongs to the universal ribosomal protein uS8 family. As to quaternary structure, part of the 30S ribosomal subunit. Contacts proteins S5 and S12.

In terms of biological role, one of the primary rRNA binding proteins, it binds directly to 16S rRNA central domain where it helps coordinate assembly of the platform of the 30S subunit. This chain is Small ribosomal subunit protein uS8, found in Nitrosomonas europaea (strain ATCC 19718 / CIP 103999 / KCTC 2705 / NBRC 14298).